Consider the following 97-residue polypeptide: Large ribosomal subunit protein bL27 (97 aa).

A propeptide spanning residues 1–12 (MLKMNLANLQLF) is cleaved from the precursor. A disordered region spans residues 14–37 (HKKGGGSTSNGRDSQAKRLGAKAA).

It belongs to the bacterial ribosomal protein bL27 family. In terms of processing, the N-terminus is cleaved by ribosomal processing cysteine protease Prp.

The sequence is that of Large ribosomal subunit protein bL27 from Streptococcus uberis (strain ATCC BAA-854 / 0140J).